The chain runs to 395 residues: tRNA-specific 2-thiouridylase MnmA (395 aa).

Residues 6-13 (AMSGGVDS) and L32 each bind ATP. C101 serves as the catalytic Nucleophile. A disulfide bridge connects residues C101 and C193. G125 lines the ATP pocket. An interaction with tRNA region spans residues 143–145 (KDQ). The active-site Cysteine persulfide intermediate is C193.

Belongs to the MnmA/TRMU family.

The protein resides in the cytoplasm. It catalyses the reaction S-sulfanyl-L-cysteinyl-[protein] + uridine(34) in tRNA + AH2 + ATP = 2-thiouridine(34) in tRNA + L-cysteinyl-[protein] + A + AMP + diphosphate + H(+). Catalyzes the 2-thiolation of uridine at the wobble position (U34) of tRNA, leading to the formation of s(2)U34. This is tRNA-specific 2-thiouridylase MnmA from Corynebacterium jeikeium (strain K411).